We begin with the raw amino-acid sequence, 31 residues long: Photosystem II reaction center protein T (31 aa).

A helical transmembrane segment spans residues 3–23 (AFSYTLLMALAAVTLFFAVAF).

This sequence belongs to the PsbT family. In terms of assembly, PSII is composed of 1 copy each of membrane proteins PsbA, PsbB, PsbC, PsbD, PsbE, PsbF, PsbH, PsbI, PsbJ, PsbK, PsbL, PsbM, PsbT, PsbX, PsbY, Psb30/Ycf12, peripheral proteins PsbO, CyanoQ (PsbQ), PsbU, PsbV and a large number of cofactors. It forms dimeric complexes.

The protein resides in the cellular thylakoid membrane. Its function is as follows. Found at the monomer-monomer interface of the photosystem II (PS II) dimer, plays a role in assembly and dimerization of PSII. PSII is a light-driven water plastoquinone oxidoreductase, using light energy to abstract electrons from H(2)O, generating a proton gradient subsequently used for ATP formation. This is Photosystem II reaction center protein T from Prochlorococcus marinus (strain MIT 9211).